Reading from the N-terminus, the 593-residue chain is Probable tripeptidyl-peptidase SED3 (593 aa).

Residues 1–18 (MLLRWHSVIPLFLTMTVA) form the signal peptide. The propeptide at 19-198 (LPNTYRTVVE…SLQVIYSSTN (180 aa)) is removed in mature form. Asn198, Asn204, Asn261, and Asn275 each carry an N-linked (GlcNAc...) asparagine glycan. A Peptidase S53 domain is found at 206 to 592 (TITPRCLREL…RILAKIVQHM (387 aa)). Catalysis depends on charge relay system residues Glu282 and Asp286. An N-linked (GlcNAc...) asparagine glycan is attached at Asn295. Catalysis depends on Ser496, which acts as the Charge relay system. Positions 538 and 539 each coordinate Ca(2+). N-linked (GlcNAc...) asparagine glycans are attached at residues Asn554 and Asn566. Gly570 and Asp572 together coordinate Ca(2+).

Ca(2+) is required as a cofactor.

The protein localises to the secreted. The protein resides in the extracellular space. It carries out the reaction Release of an N-terminal tripeptide from a polypeptide.. In terms of biological role, secreted tripeptidyl-peptidase which degrades proteins at acidic pHs and is involved in virulence. The protein is Probable tripeptidyl-peptidase SED3 (SED3) of Trichophyton verrucosum (strain HKI 0517).